The chain runs to 999 residues: MEAAHSVPVQDVLSRFGVAESCGLSPEQVRRNREKYGPNELPAEERKSLWELVLEQFEDLLVRILLMAAFLSFILAWFEEGEESTTAFVEPIVIIMILIANAVVGVWQERNAESAIEALKEYEPEMGKVIRADRSGVQRIRARDIVPGDIVEVAVGDKVPADIRIIEIRSTTLRVDQSILTGESMSVIKHADPIPDPRAVNQDKKNMLFSGTNIAAGKAVGIVIATGVYTEIGKIRNQMVETEPEKTPLQQKLDEFSQQLSKVIFLVCIAVWVINISHFSDPVHGGSWFRGAIYYFKTSVALAVAAIPEGLPAVITTCLALGTRRMAKKNAIVRSLPSVETLGCTSVICSDKTGTLTTNQMSVCRMFIMEKVEGTQCSLHEFSITGSTYAPEGQILKDEKPVRCGQYDGLVELATICALCNDSSLDYNESKKVYEKVGEATETALTCLVEKMNVFDTDTSKLSKVERANACNSVIKHLMRKECTLEFSRDRKSMSVYCTPTGPGHNSAGSKMFVKGAPESVIERCTHVRVGTAKVPLTPPVREKILSQIRDWGMGTDTLRCLALATHDAPVQRETMQLHDSTTFTHYETNLTFVGCVGMLDPPRKEVTSSIEMCRKAGIRVIMITGDNKGTAVAICRRIGIFTESEDVAGKAYTGREFDELSPEAQRQACREARCFARVEPAHKSRIVEYLQSFNEITAMTGDGVNDAPALKKAEIGIAMGSGTAVAKSAAEMVLSDDNFSTIVSAVEEGRAIYNNMKQFIRYLISSNVGEVVCIFLTAILGLPEALIPVQLLWVNLVTDGLPATALGFNPPDLDIMDKLPRNPKEPLISGWLFFRYLAIGVYVGLATVGAATWWFLYDAEGPQVSFHQLRNFMRCTEDNPIFEGVNCEIFESRYPTTMALSVLVTIEMCNALNSVSENQSLLRMPPWLNIWLLGAIVMSMALHFFILYVKPMPLIFQVTPLSWPQWVVVLKISLPVILLDEGLKYLSRNHLEGEEDKK.

Over 1-48 (MEAAHSVPVQDVLSRFGVAESCGLSPEQVRRNREKYGPNELPAEERKS) the chain is Cytoplasmic. Residues 49–69 (LWELVLEQFEDLLVRILLMAA) traverse the membrane as a helical segment. The Lumenal segment spans residues 70–89 (FLSFILAWFEEGEESTTAFV). A helical transmembrane segment spans residues 90 to 110 (EPIVIIMILIANAVVGVWQER). Residues 111 to 253 (NAESAIEALK…PEKTPLQQKL (143 aa)) are Cytoplasmic-facing. Residues 254-273 (DEFSQQLSKVIFLVCIAVWV) form a helical membrane-spanning segment. The Lumenal segment spans residues 274–295 (INISHFSDPVHGGSWFRGAIYY). Residues 296–313 (FKTSVALAVAAIPEGLPA) traverse the membrane as a helical segment. Residues valine 304, alanine 305, isoleucine 307, and glutamate 309 each contribute to the Ca(2+) site. Over 314–757 (VITTCLALGT…EEGRAIYNNM (444 aa)) the chain is Cytoplasmic. Catalysis depends on aspartate 351, which acts as the 4-aspartylphosphate intermediate. Mg(2+) is bound by residues aspartate 351 and threonine 353. Threonine 353 provides a ligand contact to ATP. Residues 370–400 (EKVEGTQCSLHEFSITGSTYAPEGQILKDEK) form an interaction with phospholamban 1 region. ATP contacts are provided by glutamate 442, arginine 489, lysine 515, arginine 560, threonine 625, glycine 626, aspartate 627, arginine 678, and lysine 684. Aspartate 703 contributes to the Mg(2+) binding site. Asparagine 706 contacts ATP. The helical transmembrane segment at 758-777 (KQFIRYLISSNVGEVVCIFL) threads the bilayer. Ca(2+)-binding residues include asparagine 768 and glutamate 771. Over 778-787 (TAILGLPEAL) the chain is Lumenal. Residues 788 to 808 (IPVQLLWVNLVTDGLPATALG) form a helical membrane-spanning segment. Residues 788 to 808 (IPVQLLWVNLVTDGLPATALG) are interaction with phospholamban 2. Ca(2+)-binding residues include asparagine 796, threonine 799, and aspartate 800. Topologically, residues 809-828 (FNPPDLDIMDKLPRNPKEPL) are cytoplasmic. The chain crosses the membrane as a helical span at residues 829–851 (ISGWLFFRYLAIGVYVGLATVGA). The Lumenal portion of the chain corresponds to 852 to 897 (ATWWFLYDAEGPQVSFHQLRNFMRCTEDNPIFEGVNCEIFESRYPT). Residues 898 to 917 (TMALSVLVTIEMCNALNSVS) traverse the membrane as a helical segment. Glutamate 908 serves as a coordination point for Ca(2+). Over 918–930 (ENQSLLRMPPWLN) the chain is Cytoplasmic. A helical membrane pass occupies residues 931 to 949 (IWLLGAIVMSMALHFFILY). Topologically, residues 950–964 (VKPMPLIFQVTPLSW) are lumenal. Residues 965–985 (PQWVVVLKISLPVILLDEGLK) form a helical membrane-spanning segment. The Cytoplasmic segment spans residues 986 to 999 (YLSRNHLEGEEDKK).

The protein belongs to the cation transport ATPase (P-type) (TC 3.A.3) family. Type IIA subfamily. Interacts with sarcolipin (SLN). Interacts with phospholamban (PLN). Interacts with myoregulin (MRLN). Interacts with DWORF. The cofactor is Mg(2+). As to expression, found in spleen, lung, intestine and brain.

It localises to the endoplasmic reticulum membrane. The protein resides in the sarcoplasmic reticulum membrane. The catalysed reaction is Ca(2+)(in) + ATP + H2O = Ca(2+)(out) + ADP + phosphate + H(+). With respect to regulation, inhibited by sarcolipin (SLN), phospholamban (PLN) and myoregulin (MRLN). Enhanced by DWORF; DWORF increases activity by displacing sarcolipin (SLN), phospholamban (PLN) and myoregulin (MRLN). This magnesium-dependent enzyme catalyzes the hydrolysis of ATP coupled with the transport of calcium. Transports calcium ions from the cytosol into the sarcoplasmic/endoplasmic reticulum lumen. Contributes to calcium sequestration involved in muscular excitation/contraction. The sequence is that of Sarcoplasmic/endoplasmic reticulum calcium ATPase 3 (ATP2A3) from Gallus gallus (Chicken).